The chain runs to 469 residues: 3-isopropylmalate dehydratase large subunit (469 aa).

Positions 350, 410, and 413 each coordinate [4Fe-4S] cluster.

This sequence belongs to the aconitase/IPM isomerase family. LeuC type 1 subfamily. As to quaternary structure, heterodimer of LeuC and LeuD. [4Fe-4S] cluster serves as cofactor.

It catalyses the reaction (2R,3S)-3-isopropylmalate = (2S)-2-isopropylmalate. It participates in amino-acid biosynthesis; L-leucine biosynthesis; L-leucine from 3-methyl-2-oxobutanoate: step 2/4. Functionally, catalyzes the isomerization between 2-isopropylmalate and 3-isopropylmalate, via the formation of 2-isopropylmaleate. The chain is 3-isopropylmalate dehydratase large subunit from Rhodopseudomonas palustris (strain TIE-1).